Reading from the N-terminus, the 386-residue chain is Succinyl-diaminopimelate desuccinylase (386 aa).

His72 contacts Zn(2+). Asp74 is an active-site residue. Asp105 is a binding site for Zn(2+). Glu139 acts as the Proton acceptor in catalysis. Residues Glu140, Glu168, and His353 each contribute to the Zn(2+) site.

Belongs to the peptidase M20A family. DapE subfamily. As to quaternary structure, homodimer. Zn(2+) serves as cofactor. Requires Co(2+) as cofactor.

It carries out the reaction N-succinyl-(2S,6S)-2,6-diaminopimelate + H2O = (2S,6S)-2,6-diaminopimelate + succinate. It participates in amino-acid biosynthesis; L-lysine biosynthesis via DAP pathway; LL-2,6-diaminopimelate from (S)-tetrahydrodipicolinate (succinylase route): step 3/3. Functionally, catalyzes the hydrolysis of N-succinyl-L,L-diaminopimelic acid (SDAP), forming succinate and LL-2,6-diaminopimelate (DAP), an intermediate involved in the bacterial biosynthesis of lysine and meso-diaminopimelic acid, an essential component of bacterial cell walls. In Rhodospirillum centenum (strain ATCC 51521 / SW), this protein is Succinyl-diaminopimelate desuccinylase.